A 295-amino-acid chain; its full sequence is Nucleotide-binding protein LSL_1171 (295 aa).

Position 13–20 (13–20 (GMSGAGKT)) interacts with ATP. 63 to 66 (DLRS) is a GTP binding site.

Belongs to the RapZ-like family.

Displays ATPase and GTPase activities. The protein is Nucleotide-binding protein LSL_1171 of Ligilactobacillus salivarius (strain UCC118) (Lactobacillus salivarius).